Here is a 285-residue protein sequence, read N- to C-terminus: 2-dehydro-3-deoxyphosphooctonate aldolase (285 aa).

This sequence belongs to the KdsA family.

The protein resides in the cytoplasm. It carries out the reaction D-arabinose 5-phosphate + phosphoenolpyruvate + H2O = 3-deoxy-alpha-D-manno-2-octulosonate-8-phosphate + phosphate. The protein operates within carbohydrate biosynthesis; 3-deoxy-D-manno-octulosonate biosynthesis; 3-deoxy-D-manno-octulosonate from D-ribulose 5-phosphate: step 2/3. Its pathway is bacterial outer membrane biogenesis; lipopolysaccharide biosynthesis. The polypeptide is 2-dehydro-3-deoxyphosphooctonate aldolase (Acidovorax ebreus (strain TPSY) (Diaphorobacter sp. (strain TPSY))).